The following is a 477-amino-acid chain: MSPQTETKASVGFKAGVKEYKLTYYTPEYQTKDTDILAAFRVTPQPGVPPEEAGAAVAAESSTGTWTTVWTDGLTSLDRYKGRCYRIERVVGEKDQYIAYVAYPLDLFEEGSVTNMFTSIVGNVFGFKALRALRLEDLRIPPAYVKTFQGPPHGIQVERDKLNKYGRPLLGCTIKPKLGLSAKNYGRAVYECLRGGLDFTKDDENVNSQPFMRWRDRFLFCAEALFKAQVETGEIKGHYLNATAGTCEEMIKRAVFARELGVPIVMHDYLTGGFTANTSLAHYCRDNGLLLHIHRAMHAVIDRQKNHGIHFRVLAKALRMSGGDHIHSGTVVGKLEGERDITLGFVDLLRDDFVEQDRSRGIYFTQDWVSLPGVLPVASGGIHVWHMPALTEIFGDDSVLQFGGGTLGHPWGNAPGAVANRVALEACVKARNEGRDLAQEGNQIIREASKWSPELAAACEVWKEIVFNFAAVDVLDK.

A propeptide spanning residues 1-2 (MS) is cleaved from the precursor. At Pro3 the chain carries N-acetylproline. Lys14 carries the N6,N6,N6-trimethyllysine modification. Substrate is bound by residues Asn123 and Thr173. The active-site Proton acceptor is Lys175. Position 177 (Lys177) interacts with substrate. Lys201, Asp203, and Glu204 together coordinate Mg(2+). Lys201 is modified (N6-carboxylysine). His294 acts as the Proton acceptor in catalysis. The substrate site is built by Arg295, His327, and Ser379.

The protein belongs to the RuBisCO large chain family. Type I subfamily. Heterohexadecamer of 8 large chains and 8 small chains; disulfide-linked. The disulfide link is formed within the large subunit homodimers. It depends on Mg(2+) as a cofactor. The disulfide bond which can form in the large chain dimeric partners within the hexadecamer appears to be associated with oxidative stress and protein turnover.

It localises to the plastid. The protein resides in the chloroplast. The catalysed reaction is 2 (2R)-3-phosphoglycerate + 2 H(+) = D-ribulose 1,5-bisphosphate + CO2 + H2O. It catalyses the reaction D-ribulose 1,5-bisphosphate + O2 = 2-phosphoglycolate + (2R)-3-phosphoglycerate + 2 H(+). Functionally, ruBisCO catalyzes two reactions: the carboxylation of D-ribulose 1,5-bisphosphate, the primary event in carbon dioxide fixation, as well as the oxidative fragmentation of the pentose substrate in the photorespiration process. Both reactions occur simultaneously and in competition at the same active site. In Nicotiana debneyi (Debney's tobacco), this protein is Ribulose bisphosphate carboxylase large chain.